The chain runs to 511 residues: ATP synthase subunit alpha (511 aa).

169–176 (GDRQTGKT) provides a ligand contact to ATP.

The protein belongs to the ATPase alpha/beta chains family. As to quaternary structure, F-type ATPases have 2 components, CF(1) - the catalytic core - and CF(0) - the membrane proton channel. CF(1) has five subunits: alpha(3), beta(3), gamma(1), delta(1), epsilon(1). CF(0) has three main subunits: a(1), b(2) and c(9-12). The alpha and beta chains form an alternating ring which encloses part of the gamma chain. CF(1) is attached to CF(0) by a central stalk formed by the gamma and epsilon chains, while a peripheral stalk is formed by the delta and b chains.

It localises to the cell inner membrane. The enzyme catalyses ATP + H2O + 4 H(+)(in) = ADP + phosphate + 5 H(+)(out). In terms of biological role, produces ATP from ADP in the presence of a proton gradient across the membrane. The alpha chain is a regulatory subunit. The chain is ATP synthase subunit alpha from Bartonella bacilliformis (strain ATCC 35685 / KC583 / Herrer 020/F12,63).